Consider the following 309-residue polypeptide: SERTA domain-containing protein 2 (309 aa).

3 disordered regions span residues 1-30 (MLGKGGKRKFDEHEDGLEGKIVSPSDGPSR), 79-114 (EGSLRPAFTPSSQPSNSLSDSYQEAPPPAPHPCDLG), and 175-220 (PTST…MDSL). Basic and acidic residues predominate over residues 8-18 (RKFDEHEDGLE). The SERTA domain maps to 33–80 (YTLQRQTIFNISLMKLYNHRPLTEPSLQKTVLINNMLRRIQEELKQEG). Composition is skewed to low complexity over residues 89 to 99 (SSQPSNSLSDS) and 175 to 189 (PTSTSTEAAHTAAPE). The span at 204–216 (EGPEEGRTDDSRF) shows a compositional bias: basic and acidic residues. Positions 230–306 (TGFLTDLTLD…TELDHIMEVL (77 aa)) are required for transactivation activity. The short motif at 233–238 (LTDLTL) is the Nuclear export signal (NES) element.

Interacts with XPO1; which mediates nuclear export. Interacts with TFDP1; modulates transactivation activity of TFDP1/E2F complexes. Post-translationally, polyubiquitinated, which promotes proteasomal degradation. As to expression, expressed in white and brown adipose tissue.

It is found in the nucleus. The protein resides in the cytoplasm. Functionally, acts at E2F-responsive promoters as coregulator to integrate signals provided by PHD- and/or bromodomain-containing transcription factors. May act as coactivator as well as corepressor of E2F1-TFDP1 and E2F4-TFDP1 complexes on E2F consensus binding sites, which would activate or inhibit E2F-target genes expression. Modulates fat storage by down-regulating the expression of key genes involved in adipocyte lipolysis, thermogenesis and oxidative metabolism. In Mus musculus (Mouse), this protein is SERTA domain-containing protein 2 (Sertad2).